Reading from the N-terminus, the 220-residue chain is Phosphatidylserine decarboxylase proenzyme (220 aa).

The active-site Schiff-base intermediate with substrate; via pyruvic acid is the serine 188. The residue at position 188 (serine 188) is a Pyruvic acid (Ser); by autocatalysis.

It belongs to the phosphatidylserine decarboxylase family. PSD-A subfamily. In terms of assembly, heterodimer of a large membrane-associated beta subunit and a small pyruvoyl-containing alpha subunit. It depends on pyruvate as a cofactor. Post-translationally, is synthesized initially as an inactive proenzyme. Formation of the active enzyme involves a self-maturation process in which the active site pyruvoyl group is generated from an internal serine residue via an autocatalytic post-translational modification. Two non-identical subunits are generated from the proenzyme in this reaction, and the pyruvate is formed at the N-terminus of the alpha chain, which is derived from the carboxyl end of the proenzyme. The post-translation cleavage follows an unusual pathway, termed non-hydrolytic serinolysis, in which the side chain hydroxyl group of the serine supplies its oxygen atom to form the C-terminus of the beta chain, while the remainder of the serine residue undergoes an oxidative deamination to produce ammonia and the pyruvoyl prosthetic group on the alpha chain.

It localises to the cell membrane. The enzyme catalyses a 1,2-diacyl-sn-glycero-3-phospho-L-serine + H(+) = a 1,2-diacyl-sn-glycero-3-phosphoethanolamine + CO2. It functions in the pathway phospholipid metabolism; phosphatidylethanolamine biosynthesis; phosphatidylethanolamine from CDP-diacylglycerol: step 2/2. Functionally, catalyzes the formation of phosphatidylethanolamine (PtdEtn) from phosphatidylserine (PtdSer). In Cytophaga hutchinsonii (strain ATCC 33406 / DSM 1761 / CIP 103989 / NBRC 15051 / NCIMB 9469 / D465), this protein is Phosphatidylserine decarboxylase proenzyme.